Consider the following 359-residue polypeptide: DNA replication and repair protein RecF (359 aa).

30–37 (GNNGSGKT) contributes to the ATP binding site.

It belongs to the RecF family.

The protein resides in the cytoplasm. Functionally, the RecF protein is involved in DNA metabolism; it is required for DNA replication and normal SOS inducibility. RecF binds preferentially to single-stranded, linear DNA. It also seems to bind ATP. This chain is DNA replication and repair protein RecF, found in Haemophilus influenzae (strain 86-028NP).